The following is a 317-amino-acid chain: Testis-expressed protein 19.2 (317 aa).

The segment covering Met-64–Glu-75 has biased composition (acidic residues). The disordered stretch occupies residues Met-64 to Gln-113. An important for interaction with piRNA region spans residues Gln-101 to Leu-145.

As to quaternary structure, interacts with UBR2. Interacts with piRNA-associated proteins DDX4, EDC4, MAEL, PIWIL1, PIWIL2, RANBP9 and TDRD6. Specifically expressed in somatic cells of male gonad lineage.

It is found in the cytoplasm. In terms of biological role, may be required during spermatogenesis, probably by participating in the repression of retrotransposable elements and prevent their mobilization. With its paralog, Tex19.1, collaborates with the Piwi-interacting RNA (piRNA) pathway, which mediates the repression of transposable elements during meiosis by forming complexes composed of piRNAs and Piwi proteins. Interacts with Piwi proteins and directly binds piRNAs, a class of 24 to 30 nucleotide RNAs that are generated by a Dicer-independent mechanism and are primarily derived from transposons and other repeated sequence elements. The chain is Testis-expressed protein 19.2 (Tex19.2) from Mus musculus (Mouse).